Here is a 130-residue protein sequence, read N- to C-terminus: Small ribosomal subunit protein bS6 (130 aa).

The tract at residues 96–130 is disordered; sequence VTEASPMAKARDERDSRRSPSDDRIEEESAEENAE. Over residues 104–118 the composition is skewed to basic and acidic residues; sequence KARDERDSRRSPSDD. Residues 119–130 show a composition bias toward acidic residues; that stretch reads RIEEESAEENAE.

The protein belongs to the bacterial ribosomal protein bS6 family.

Functionally, binds together with bS18 to 16S ribosomal RNA. This is Small ribosomal subunit protein bS6 from Shewanella denitrificans (strain OS217 / ATCC BAA-1090 / DSM 15013).